We begin with the raw amino-acid sequence, 628 residues long: Nucleoside-triphosphatase 2 (628 aa).

The signal sequence occupies residues 1–25; sequence MWLPVYVPLLLVFGVSLSLPHGSLG. Catalysis depends on glutamate 236, which acts as the Proton acceptor. Asparagine 432 carries an N-linked (GlcNAc...) asparagine glycan.

This sequence belongs to the GDA1/CD39 NTPase family. In terms of assembly, homotetramer.

The protein localises to the secreted. It localises to the parasitophorous vacuole. The catalysed reaction is a ribonucleoside 5'-triphosphate + H2O = a ribonucleoside 5'-diphosphate + phosphate + H(+). In terms of biological role, may perform an important processing step in the conversion of high energy nucleotides prior to uptake by the parasite. NTPAse-II has a specific activity 4.5-fold lower than NTPAse-I in hydrolysis of ATP. The primary difference between these isozymes lies in their ability to hydrolyze nucleoside triphosphate versus diphosphate substrates. While NTPAse-II hydrolyzes ATP to ADP and ADP to AMP at almost the same rate, NTPAse-I hydrolyzes ADP to AMP at a much slower rate (0.7% of the rate for ATP). In Toxoplasma gondii, this protein is Nucleoside-triphosphatase 2 (NTP1).